A 315-amino-acid polypeptide reads, in one-letter code: Ribonuclease HII (315 aa).

Residues 78 to 267 (TLVAGVDEAG…VREALGLAPL (190 aa)) enclose the RNase H type-2 domain. The a divalent metal cation site is built by aspartate 84, glutamate 85, and aspartate 176. A disordered region spans residues 273-292 (APPPESAAEPGGEGAIAGIA). Over residues 278-292 (SAAEPGGEGAIAGIA) the composition is skewed to low complexity.

It belongs to the RNase HII family. Mn(2+) serves as cofactor. It depends on Mg(2+) as a cofactor.

It is found in the cytoplasm. It carries out the reaction Endonucleolytic cleavage to 5'-phosphomonoester.. Functionally, endonuclease that specifically degrades the RNA of RNA-DNA hybrids. In Anaeromyxobacter sp. (strain Fw109-5), this protein is Ribonuclease HII.